Consider the following 342-residue polypeptide: tRNA-specific 2-thiouridylase MnmA (342 aa).

ATP is bound by residues 6–13 (LLSGGVDS) and Leu32. Cys92 serves as the catalytic Nucleophile. Cys92 and Cys191 are disulfide-bonded. Gly116 contributes to the ATP binding site. Positions 138 to 140 (KDQ) are interaction with tRNA. Catalysis depends on Cys191, which acts as the Cysteine persulfide intermediate. Positions 293–294 (RY) are interaction with tRNA.

This sequence belongs to the MnmA/TRMU family.

The protein localises to the cytoplasm. It catalyses the reaction S-sulfanyl-L-cysteinyl-[protein] + uridine(34) in tRNA + AH2 + ATP = 2-thiouridine(34) in tRNA + L-cysteinyl-[protein] + A + AMP + diphosphate + H(+). Functionally, catalyzes the 2-thiolation of uridine at the wobble position (U34) of tRNA, leading to the formation of s(2)U34. In Helicobacter pylori (strain HPAG1), this protein is tRNA-specific 2-thiouridylase MnmA.